A 749-amino-acid polypeptide reads, in one-letter code: Cytosolic phospholipase A2 (749 aa).

The C2 domain occupies 1-124 (MASIDPYQHI…GEKKQVPFTF (124 aa)). A phospholipid binding region spans residues 1 to 178 (MASIDPYQHI…LRKLLGPEKT (178 aa)). Residues Asp40, Thr41, Asp43, Asn65, Asp93, Ala94, and Asn95 each contribute to the Ca(2+) site. One can recognise a PLA2c domain in the interval 138-740 (VCSSTDLRFS…NDVESRKLHH (603 aa)). Ser229 functions as the Nucleophile in the catalytic mechanism. Positions 428 to 452 (HILGNDSSDSDDEMQEPKGTENAKA) are disordered. A compositionally biased stretch (basic and acidic residues) spans 442 to 452 (QEPKGTENAKA). Asp549 serves as the catalytic Proton acceptor. The segment at 729–749 (SLNDVESRKLHHKDSQSKFQM) is disordered. The segment covering 733-749 (VESRKLHHKDSQSKFQM) has biased composition (basic and acidic residues).

Its subcellular location is the cytoplasm. The protein localises to the cytoplasmic vesicle. The catalysed reaction is a 1,2-diacyl-sn-glycero-3-phosphocholine + H2O = a 1-acyl-sn-glycero-3-phosphocholine + a fatty acid + H(+). The enzyme catalyses a 1-acyl-sn-glycero-3-phosphocholine + H2O = sn-glycerol 3-phosphocholine + a fatty acid + H(+). Its activity is regulated as follows. Stimulated by agonists such as ATP, EGF, thrombin and bradykinin as well as by cytosolic Ca(2+). Selectively hydrolyzes arachidonyl phospholipids in the sn-2 position releasing arachidonic acid. Together with its lysophospholipid activity, it is implicated in the initiation of the inflammatory response. In Xenopus laevis (African clawed frog), this protein is Cytosolic phospholipase A2 (pla2g4a).